The primary structure comprises 401 residues: Riboflavin biosynthesis protein RibBA (401 aa).

The tract at residues 1–203 is DHBP synthase; the sequence is MTDFQFSKVE…IQQLQEYRRK (203 aa). D-ribulose 5-phosphate contacts are provided by residues 30–31, Asp35, 142–146, and Glu166; these read RE and RNGHT. Glu31 lines the Mg(2+) pocket. Residue His145 participates in Mg(2+) binding. A GTP cyclohydrolase II region spans residues 204 to 401; it reads HDSLVKQISV…QIKMGHMFNF (198 aa). 254-258 serves as a coordination point for GTP; the sequence is RIHSE. Positions 259, 270, and 272 each coordinate Zn(2+). GTP is bound by residues Gln275, 297–299, and Thr319; that span reads EGR. The Proton acceptor; for GTP cyclohydrolase activity role is filled by Asp331. Arg333 (nucleophile; for GTP cyclohydrolase activity) is an active-site residue. Thr354 and Lys359 together coordinate GTP.

The protein in the N-terminal section; belongs to the DHBP synthase family. It in the C-terminal section; belongs to the GTP cyclohydrolase II family. The cofactor is Mg(2+). It depends on Mn(2+) as a cofactor. Zn(2+) is required as a cofactor.

It carries out the reaction D-ribulose 5-phosphate = (2S)-2-hydroxy-3-oxobutyl phosphate + formate + H(+). It catalyses the reaction GTP + 4 H2O = 2,5-diamino-6-hydroxy-4-(5-phosphoribosylamino)-pyrimidine + formate + 2 phosphate + 3 H(+). It participates in cofactor biosynthesis; riboflavin biosynthesis; 2-hydroxy-3-oxobutyl phosphate from D-ribulose 5-phosphate: step 1/1. The protein operates within cofactor biosynthesis; riboflavin biosynthesis; 5-amino-6-(D-ribitylamino)uracil from GTP: step 1/4. Functionally, catalyzes the conversion of D-ribulose 5-phosphate to formate and 3,4-dihydroxy-2-butanone 4-phosphate. Its function is as follows. Catalyzes the conversion of GTP to 2,5-diamino-6-ribosylamino-4(3H)-pyrimidinone 5'-phosphate (DARP), formate and pyrophosphate. In Actinobacillus pleuropneumoniae serotype 5b (strain L20), this protein is Riboflavin biosynthesis protein RibBA.